A 315-amino-acid polypeptide reads, in one-letter code: Olfactory receptor 3A1 (315 aa).

The Extracellular portion of the chain corresponds to Met1–Pro28. Asn8 carries an N-linked (GlcNAc...) asparagine glycan. A helical transmembrane segment spans residues Val29 to Val52. At Leu53 to Ser60 the chain is on the cytoplasmic side. The chain crosses the membrane as a helical span at residues Pro61–Pro82. The Extracellular portion of the chain corresponds to Ser83 to Gln103. Cys100 and Cys192 are joined by a disulfide. The helical transmembrane segment at Leu104–Tyr123 threads the bilayer. Topologically, residues Asp124 to Val143 are cytoplasmic. The helical transmembrane segment at Gln144 to Thr161 threads the bilayer. At His162 to Glu199 the chain is on the extracellular side. Residues Leu200–His223 form a helical membrane-spanning segment. Residues Val224–Ala240 are Cytoplasmic-facing. The chain crosses the membrane as a helical span at residues Phe241–Arg264. Residues Leu265 to Lys275 are Extracellular-facing. A helical membrane pass occupies residues Ala276–Phe295. At Arg296–Ala315 the chain is on the cytoplasmic side.

It belongs to the G-protein coupled receptor 1 family.

Its subcellular location is the cell membrane. Odorant receptor. The chain is Olfactory receptor 3A1 (OR3A1) from Pan troglodytes (Chimpanzee).